The following is a 259-amino-acid chain: Cobalt-precorrin-4 C(11)-methyltransferase (259 aa).

This sequence belongs to the precorrin methyltransferase family.

The enzyme catalyses Co-precorrin-4 + S-adenosyl-L-methionine = Co-precorrin-5A + S-adenosyl-L-homocysteine + H(+). The protein operates within cofactor biosynthesis; adenosylcobalamin biosynthesis; cob(II)yrinate a,c-diamide from sirohydrochlorin (anaerobic route): step 4/10. Catalyzes the methylation of C-11 in cobalt-precorrin-4 to form cobalt-precorrin-5A. This chain is Cobalt-precorrin-4 C(11)-methyltransferase (cbiF), found in Methanocaldococcus jannaschii (strain ATCC 43067 / DSM 2661 / JAL-1 / JCM 10045 / NBRC 100440) (Methanococcus jannaschii).